The primary structure comprises 416 residues: UPF0761 membrane protein Mpe_A1422 (416 aa).

6 helical membrane-spanning segments follow: residues 63 to 83, 120 to 140, 159 to 179, 198 to 218, 234 to 256, and 271 to 291; these read IALV…PMFG, LGTV…LTID, VLVY…SLTL, LSVL…AGLF, GGLF…LAQV, and IFLI…VIAA.

It belongs to the UPF0761 family.

The protein localises to the cell inner membrane. The sequence is that of UPF0761 membrane protein Mpe_A1422 from Methylibium petroleiphilum (strain ATCC BAA-1232 / LMG 22953 / PM1).